The following is a 425-amino-acid chain: Tol-Pal system protein TolB (425 aa).

Positions 1 to 23 (MQMMKKRILLCLLVGMTCLPVLA) are cleaved as a signal peptide.

This sequence belongs to the TolB family. As to quaternary structure, the Tol-Pal system is composed of five core proteins: the inner membrane proteins TolA, TolQ and TolR, the periplasmic protein TolB and the outer membrane protein Pal. They form a network linking the inner and outer membranes and the peptidoglycan layer.

It localises to the periplasm. Functionally, part of the Tol-Pal system, which plays a role in outer membrane invagination during cell division and is important for maintaining outer membrane integrity. In Albidiferax ferrireducens (strain ATCC BAA-621 / DSM 15236 / T118) (Rhodoferax ferrireducens), this protein is Tol-Pal system protein TolB.